Consider the following 252-residue polypeptide: Type II secretion system protein N (252 aa).

The Cytoplasmic portion of the chain corresponds to 1–4; that stretch reads MKRA. A helical transmembrane segment spans residues 5–25; sequence VGYGLLFSTVLMTSVVVHLPA. Topologically, residues 26–252 are periplasmic; the sequence is QVALSPLPLP…RYPFNQQGQL (227 aa).

It belongs to the GSP N family.

It is found in the cell inner membrane. Its function is as follows. Involved in a type II secretion system (T2SS, formerly general secretion pathway, GSP) for the export of proteins. Required for secretion of cholera toxin through the outer membrane. This Vibrio cholerae serotype O1 (strain ATCC 39315 / El Tor Inaba N16961) protein is Type II secretion system protein N (epsN).